The primary structure comprises 147 residues: Mannitol-specific cryptic phosphotransferase enzyme IIA component (147 aa).

The PTS EIIA type-2 domain maps to 5 to 147 (DYFPESSISV…KQLADIISRG (143 aa)). Residue His67 is the Tele-phosphohistidine intermediate of the active site. Residue His67 is modified to Phosphohistidine; by HPr.

Its subcellular location is the cytoplasm. In terms of biological role, the phosphoenolpyruvate-dependent sugar phosphotransferase system (sugar PTS), a major carbohydrate active transport system, catalyzes the phosphorylation of incoming sugar substrates concomitantly with their translocation across the cell membrane. The enzyme II CmtAB PTS system is involved in D-mannitol transport. The protein is Mannitol-specific cryptic phosphotransferase enzyme IIA component (cmtB) of Escherichia coli O157:H7.